Reading from the N-terminus, the 385-residue chain is 8-amino-7-oxononanoate synthase (385 aa).

Arg21 is a substrate binding site. Residue 108 to 109 coordinates pyridoxal 5'-phosphate; the sequence is GF. His133 provides a ligand contact to substrate. Positions 179, 207, and 233 each coordinate pyridoxal 5'-phosphate. Lys236 carries the N6-(pyridoxal phosphate)lysine modification. Residue Thr352 participates in substrate binding.

It belongs to the class-II pyridoxal-phosphate-dependent aminotransferase family. BioF subfamily. Homodimer. Requires pyridoxal 5'-phosphate as cofactor.

It carries out the reaction 6-carboxyhexanoyl-[ACP] + L-alanine + H(+) = (8S)-8-amino-7-oxononanoate + holo-[ACP] + CO2. It participates in cofactor biosynthesis; biotin biosynthesis. Its function is as follows. Catalyzes the decarboxylative condensation of pimeloyl-[acyl-carrier protein] and L-alanine to produce 8-amino-7-oxononanoate (AON), [acyl-carrier protein], and carbon dioxide. This chain is 8-amino-7-oxononanoate synthase, found in Klebsiella pneumoniae (strain 342).